The primary structure comprises 505 residues: L-carnitine/gamma-butyrobetaine antiporter (505 aa).

The next 12 membrane-spanning stretches (helical) occupy residues 10–30 (IEPKVFFPPLIIVGILCWLTV), 50–70 (IWGWAFEWYMVVMLIGWFWLV), 92–112 (IFMMFASCTSAAVLFWGSIEI), 143–163 (GPLPWATYSFLSVAFAYFFFV), 195–215 (FYLVALIFAMGTSLGLATPLV), 231–251 (LDAIIITCWIILNAICVACGL), 263–283 (SYLSFLMLGWVFIVSGASFIM), 316–336 (WTVFYWAWWVIYAIQMSIFLA), 347–367 (LCFGMVLGLTASTWILWTVLG), 403–423 (LSTATMWGFFILCFIATVTLI), 446–466 (LLVRIGWSVLVGIIGIVLLAL), and 475–495 (AIIAGGCPLFFVNIMVTLSFI).

It belongs to the BCCT transporter (TC 2.A.15) family. CaiT subfamily. Homotrimer.

It is found in the cell inner membrane. The catalysed reaction is 4-(trimethylamino)butanoate(in) + (R)-carnitine(out) = 4-(trimethylamino)butanoate(out) + (R)-carnitine(in). The protein operates within amine and polyamine metabolism; carnitine metabolism. In terms of biological role, catalyzes the exchange of L-carnitine for gamma-butyrobetaine. The sequence is that of L-carnitine/gamma-butyrobetaine antiporter from Salmonella arizonae (strain ATCC BAA-731 / CDC346-86 / RSK2980).